We begin with the raw amino-acid sequence, 661 residues long: Peroxisomal acyl-coenzyme A oxidase 1 (661 aa).

An N6-succinyllysine mark is found at Lys-89 and Lys-90. Residue Thr-139 coordinates FAD. N6-succinyllysine is present on Lys-159. Position 178 (Gly-178) interacts with FAD. Lys-216 carries the post-translational modification N6-acetyllysine. Lys-241 is subject to N6-succinyllysine. N6-acetyllysine is present on residues Lys-255, Lys-267, and Lys-272. Lys-349 carries the post-translational modification N6-succinyllysine. Catalysis depends on Glu-421, which acts as the Proton acceptor. Residues Lys-437, Lys-446, Lys-512, and Lys-637 each carry the N6-acetyllysine; alternate modification. Residues Lys-437, Lys-446, Lys-512, and Lys-637 each carry the N6-succinyllysine; alternate modification. The residue at position 643 (Lys-643) is an N6-succinyllysine. Phosphoserine is present on Ser-649. An N6-acetyllysine modification is found at Lys-652. Lys-655 is modified (N6-succinyllysine). A Microbody targeting signal motif is present at residues 659–661 (SKL).

The protein belongs to the acyl-CoA oxidase family. In terms of assembly, homodimer. Interacts with LONP2. It depends on FAD as a cofactor.

It localises to the peroxisome. It catalyses the reaction a 2,3-saturated acyl-CoA + O2 = a (2E)-enoyl-CoA + H2O2. The enzyme catalyses hexadecanoyl-CoA + O2 = (2E)-hexadecenoyl-CoA + H2O2. The catalysed reaction is dodecanoyl-CoA + O2 = (2E)-dodecenoyl-CoA + H2O2. It carries out the reaction octanoyl-CoA + O2 = (2E)-octenoyl-CoA + H2O2. It catalyses the reaction decanoyl-CoA + O2 = (2E)-decenoyl-CoA + H2O2. The enzyme catalyses tetradecanoyl-CoA + O2 = (2E)-tetradecenoyl-CoA + H2O2. The catalysed reaction is hexadecanedioyl-CoA + O2 = (2E)-hexadecenedioyl-CoA + H2O2. It carries out the reaction tetracosanoyl-CoA + O2 = (2E)-tetracosenoyl-CoA + H2O2. It catalyses the reaction glutaryl-CoA + O2 = (2E)-glutaconyl-CoA + H2O2. The enzyme catalyses hexanoyl-CoA + O2 = (2E)-hexenoyl-CoA + H2O2. The catalysed reaction is octadecanoyl-CoA + O2 = (2E)-octadecenoyl-CoA + H2O2. It carries out the reaction (5Z,8Z,11Z,14Z,17Z)-eicosapentaenoyl-CoA + O2 = (2E,5Z,8Z,11Z,14Z,17Z)-icosahexaenoyl-CoA + H2O2. It catalyses the reaction (6Z,9Z,12Z,15Z,18Z,21Z)-tetracosahexaenoyl-CoA + O2 = (2E,6Z,9Z,12Z,15Z,18Z,21Z)-tetracosaheptaenoyl-CoA + H2O2. Its pathway is lipid metabolism; peroxisomal fatty acid beta-oxidation. Functionally, involved in the initial and rate-limiting step of peroxisomal beta-oxidation of straight-chain saturated and unsaturated very-long-chain fatty acids. Catalyzes the desaturation of fatty acyl-CoAs such as palmitoyl-CoA (hexadecanoyl-CoA) to 2-trans-enoyl-CoAs ((2E)-enoyl-CoAs) such as (2E)-hexadecenoyl-CoA, and donates electrons directly to molecular oxygen (O(2)), thereby producing hydrogen peroxide (H(2)O(2)). Isoform 2 shows higher activity with hexadecanoyl-CoA as substrate than isoform 1. In Phascolarctos cinereus (Koala), this protein is Peroxisomal acyl-coenzyme A oxidase 1 (ACOX1).